Here is a 106-residue protein sequence, read N- to C-terminus: U1-lycotoxin-Ls1z (106 aa).

Positions 1-19 (MKVLVVVALLVTLISYSSS) are cleaved as a signal peptide. The propeptide occupies 20–40 (EGIDDLEADELLSLMANEQTR). Intrachain disulfides connect C43–C58, C50–C67, C57–C85, and C69–C83.

It belongs to the neurotoxin 19 (CSTX) family. 03 subfamily. As to expression, expressed by the venom gland.

It is found in the secreted. This is U1-lycotoxin-Ls1z from Lycosa singoriensis (Wolf spider).